Here is a 406-residue protein sequence, read N- to C-terminus: Succinylornithine transaminase (406 aa).

Lys252 is modified (N6-(pyridoxal phosphate)lysine).

Belongs to the class-III pyridoxal-phosphate-dependent aminotransferase family. AstC subfamily. Pyridoxal 5'-phosphate is required as a cofactor.

It carries out the reaction N(2)-succinyl-L-ornithine + 2-oxoglutarate = N-succinyl-L-glutamate 5-semialdehyde + L-glutamate. Its pathway is amino-acid degradation; L-arginine degradation via AST pathway; L-glutamate and succinate from L-arginine: step 3/5. Functionally, catalyzes the transamination of N(2)-succinylornithine and alpha-ketoglutarate into N(2)-succinylglutamate semialdehyde and glutamate. Can also act as an acetylornithine aminotransferase. The polypeptide is Succinylornithine transaminase (Citrobacter koseri (strain ATCC BAA-895 / CDC 4225-83 / SGSC4696)).